The sequence spans 122 residues: Small ribosomal subunit protein uS13 (122 aa).

A disordered region spans residues 99-122 (RGQRTHTNARTRKGPAKAIAGKKK).

Belongs to the universal ribosomal protein uS13 family. In terms of assembly, part of the 30S ribosomal subunit. Forms a loose heterodimer with protein S19. Forms two bridges to the 50S subunit in the 70S ribosome.

Its function is as follows. Located at the top of the head of the 30S subunit, it contacts several helices of the 16S rRNA. In the 70S ribosome it contacts the 23S rRNA (bridge B1a) and protein L5 of the 50S subunit (bridge B1b), connecting the 2 subunits; these bridges are implicated in subunit movement. Contacts the tRNAs in the A and P-sites. This is Small ribosomal subunit protein uS13 from Allorhizobium ampelinum (strain ATCC BAA-846 / DSM 112012 / S4) (Agrobacterium vitis (strain S4)).